The primary structure comprises 85 residues: Sec-independent protein translocase protein TatA (85 aa).

Residues 1-21 (MGSFSIWHWLIVLLIIMMVFG) traverse the membrane as a helical segment. Positions 39–51 (FKEGMREGSEDKP) are enriched in basic and acidic residues. The segment at 39–85 (FKEGMREGSEDKPAGSQQGQQAAGQPPRELHDSTTIDVEARDKSKQG) is disordered. Positions 52-65 (AGSQQGQQAAGQPP) are enriched in low complexity. A compositionally biased stretch (basic and acidic residues) spans 66–85 (RELHDSTTIDVEARDKSKQG).

The protein belongs to the TatA/E family. In terms of assembly, the Tat system comprises two distinct complexes: a TatABC complex, containing multiple copies of TatA, TatB and TatC subunits, and a separate TatA complex, containing only TatA subunits. Substrates initially bind to the TatABC complex, which probably triggers association of the separate TatA complex to form the active translocon.

It localises to the cell inner membrane. Functionally, part of the twin-arginine translocation (Tat) system that transports large folded proteins containing a characteristic twin-arginine motif in their signal peptide across membranes. TatA could form the protein-conducting channel of the Tat system. The polypeptide is Sec-independent protein translocase protein TatA (Ralstonia nicotianae (strain ATCC BAA-1114 / GMI1000) (Ralstonia solanacearum)).